The sequence spans 191 residues: Adenine phosphoribosyltransferase (191 aa).

The protein belongs to the purine/pyrimidine phosphoribosyltransferase family. Homodimer.

It localises to the cytoplasm. It carries out the reaction AMP + diphosphate = 5-phospho-alpha-D-ribose 1-diphosphate + adenine. The protein operates within purine metabolism; AMP biosynthesis via salvage pathway; AMP from adenine: step 1/1. Its function is as follows. Catalyzes a salvage reaction resulting in the formation of AMP, that is energically less costly than de novo synthesis. The polypeptide is Adenine phosphoribosyltransferase (Bordetella bronchiseptica (strain ATCC BAA-588 / NCTC 13252 / RB50) (Alcaligenes bronchisepticus)).